Reading from the N-terminus, the 41-residue chain is Photosystem II reaction center protein L (41 aa).

The helical transmembrane segment at 20 to 40 threads the bilayer; it reads SLYLGLLLVFVVGILFSSYFF.

This sequence belongs to the PsbL family. PSII is composed of 1 copy each of membrane proteins PsbA, PsbB, PsbC, PsbD, PsbE, PsbF, PsbH, PsbI, PsbJ, PsbK, PsbL, PsbM, PsbT, PsbX, PsbY, PsbZ, Psb30/Ycf12, peripheral proteins PsbO, CyanoQ (PsbQ), PsbU, PsbV and a large number of cofactors. It forms dimeric complexes.

It is found in the cellular thylakoid membrane. One of the components of the core complex of photosystem II (PSII). PSII is a light-driven water:plastoquinone oxidoreductase that uses light energy to abstract electrons from H(2)O, generating O(2) and a proton gradient subsequently used for ATP formation. It consists of a core antenna complex that captures photons, and an electron transfer chain that converts photonic excitation into a charge separation. This subunit is found at the monomer-monomer interface and is required for correct PSII assembly and/or dimerization. In Trichodesmium erythraeum (strain IMS101), this protein is Photosystem II reaction center protein L.